Here is a 454-residue protein sequence, read N- to C-terminus: MSTFKNEMNGNNLLHVAVLAFPFGTHAAPLLSLVKKIATEAPKVTFSFFCTTTTNDTLFSRSNEFLPNIKYYNVHDGLPKGYVSSGNPREPIFLFIKAMQENFKHVIDEAVAETGKNITCLVTDAFFWFGADLAEEMHAKWVPLWTAGPHSLLTHVYTDLIREKTGSKEVHDVKSIDVLPGFPELKASDLPEGVIKDIDVPFATMLHKMGLELPRANAVAINSFATIHPLIENELNSKFKLLLNVGPFNLTTPQRKVSDEHGCLEWLDQHENSSVVYISFGSVVTPPPHELTALAESLEECGFPFIWSFRGDPKEKLPKGFLERTKTKGKIVAWAPQVEILKHSSVGVFLTHSGWNSVLECIVGGVPMISRPFFGDQGLNTILTESVLEIGVGVDNGVLTKESIKKALELTMSSEKGGIMRQKIVKLKESAFKAVEQNGTSAMDFTTLIQIVTS.

Thr-25 serves as a coordination point for UDP. Residue His-26 is the Proton acceptor of the active site. Arg-89 is a myricetin binding site. Catalysis depends on Asp-124, which acts as the Charge relay. Myricetin is bound by residues His-155, Glu-192, and Phe-202. Ser-282, Ser-308, Trp-334, and Ala-335 together coordinate UDP. Ala-335, Gln-337, His-352, Trp-355, Asn-356, Ser-357, and Glu-360 together coordinate UDP-alpha-D-glucose. His-352 contributes to the UDP binding site. UDP contacts are provided by Asn-356, Ser-357, and Glu-360. Gly-375 contacts myricetin. 2 residues coordinate UDP-alpha-D-glucose: Asp-376 and Gln-377.

It belongs to the UDP-glycosyltransferase family. Highly expressed in flower buds, flowers and pods. Lower expression in leaves, petioles and stems.

The protein operates within secondary metabolite biosynthesis; flavonoid biosynthesis. Its function is as follows. Catalyzes the glycosylation of flavonoids at the 3-O-position. Glycosylates the 7-O-position if the 3-O-position is not available. Also able to perform 3-O-glycosylation of anthocyanidins. The polypeptide is Flavonoid 3-O-glucosyltransferase (UGT78G1) (Medicago truncatula (Barrel medic)).